Reading from the N-terminus, the 186-residue chain is MMELQGKFLIAMPHLDDYFNRTVVFMCEHNEQGSMGLVINQPTDLSIAELYSKLNFMMKNDRTFGNEMVVAGGPMHTERGFILHKNTLNAFQHTYKVTKELSMTTSADVVETLGSTFAPEKYLVALGCSSWGAGQLEKEIRDNAWLVVSSNDQILFDMPYEDRYAAANQLLGIHPYNFALAQVGHS.

The protein belongs to the UPF0301 (AlgH) family.

In Haemophilus influenzae (strain ATCC 51907 / DSM 11121 / KW20 / Rd), this protein is UPF0301 protein HI_0304.